The following is a 225-amino-acid chain: ATP-dependent dethiobiotin synthetase BioD (225 aa).

An ATP-binding site is contributed by 12–17; it reads EVGKTY. Position 16 (T16) interacts with Mg(2+). The active site involves K37. A substrate-binding site is contributed by S41. ATP-binding positions include D52, 114-117, and 174-175; these read EGAG and NC. Residues D52 and E114 each coordinate Mg(2+).

The protein belongs to the dethiobiotin synthetase family. As to quaternary structure, homodimer. Mg(2+) is required as a cofactor.

The protein localises to the cytoplasm. The catalysed reaction is (7R,8S)-7,8-diammoniononanoate + CO2 + ATP = (4R,5S)-dethiobiotin + ADP + phosphate + 3 H(+). Its pathway is cofactor biosynthesis; biotin biosynthesis; biotin from 7,8-diaminononanoate: step 1/2. Functionally, catalyzes a mechanistically unusual reaction, the ATP-dependent insertion of CO2 between the N7 and N8 nitrogen atoms of 7,8-diaminopelargonic acid (DAPA, also called 7,8-diammoniononanoate) to form a ureido ring. In Francisella tularensis subsp. novicida (strain U112), this protein is ATP-dependent dethiobiotin synthetase BioD.